Here is a 334-residue protein sequence, read N- to C-terminus: Ferredoxin--NADP reductase (334 aa).

FAD is bound by residues Asp32, Gln40, Tyr45, Val85, Phe120, Asp287, and Thr327.

Belongs to the ferredoxin--NADP reductase type 2 family. As to quaternary structure, homodimer. FAD is required as a cofactor.

It catalyses the reaction 2 reduced [2Fe-2S]-[ferredoxin] + NADP(+) + H(+) = 2 oxidized [2Fe-2S]-[ferredoxin] + NADPH. In Wolbachia pipientis subsp. Culex pipiens (strain wPip), this protein is Ferredoxin--NADP reductase.